A 70-amino-acid polypeptide reads, in one-letter code: Conotoxin Mr3.8 (70 aa).

The N-terminal stretch at 1-24 is a signal peptide; it reads MLKMGVVLFIFLVLFPLATLQLDA. A propeptide spanning residues 25–54 is cleaved from the precursor; it reads DQPVERYAKNKQLFNPHKRRGIILRAPGKR. 3 cysteine pairs are disulfide-bonded: cysteine 55–cysteine 67, cysteine 56–cysteine 68, and cysteine 61–cysteine 65.

Belongs to the conotoxin M superfamily. Expressed by the venom duct.

The protein localises to the secreted. Functionally, in vitro, inhibits proliferation of the mice ovarian cancer cells ID8. The sequence is that of Conotoxin Mr3.8 from Conus marmoreus (Marble cone).